Consider the following 286-residue polypeptide: 4-diphosphocytidyl-2-C-methyl-D-erythritol kinase (286 aa).

Residue Lys-11 is part of the active site. Residue 94–104 coordinates ATP; sequence PMGGGIGGGSS. The active site involves Asp-136.

Belongs to the GHMP kinase family. IspE subfamily.

The catalysed reaction is 4-CDP-2-C-methyl-D-erythritol + ATP = 4-CDP-2-C-methyl-D-erythritol 2-phosphate + ADP + H(+). The protein operates within isoprenoid biosynthesis; isopentenyl diphosphate biosynthesis via DXP pathway; isopentenyl diphosphate from 1-deoxy-D-xylulose 5-phosphate: step 3/6. Functionally, catalyzes the phosphorylation of the position 2 hydroxy group of 4-diphosphocytidyl-2C-methyl-D-erythritol. This chain is 4-diphosphocytidyl-2-C-methyl-D-erythritol kinase, found in Pseudomonas entomophila (strain L48).